A 364-amino-acid chain; its full sequence is Probable mannose-1-phosphate guanylyltransferase 2 (364 aa).

2 residues coordinate GDP-alpha-D-mannose: Leu-6 and Val-7. Diphosphate-binding residues include Gly-9, Gly-11, Thr-12, Arg-13, and Lys-23. 5 residues coordinate GDP-alpha-D-mannose: Gly-88, Asn-112, Asp-114, Gly-149, and Asn-176.

The protein belongs to the transferase hexapeptide repeat family.

The catalysed reaction is alpha-D-mannose 1-phosphate + GTP + H(+) = GDP-alpha-D-mannose + diphosphate. The protein operates within nucleotide-sugar biosynthesis; GDP-alpha-D-mannose biosynthesis; GDP-alpha-D-mannose from alpha-D-mannose 1-phosphate (GTP route): step 1/1. Its function is as follows. Catalyzes a reaction of the Smirnoff-Wheeler pathway, the major route to ascorbate biosynthesis in plants. This Arabidopsis thaliana (Mouse-ear cress) protein is Probable mannose-1-phosphate guanylyltransferase 2.